Here is a 224-residue protein sequence, read N- to C-terminus: Aminopyrimidine aminohydrolase (224 aa).

A substrate-binding site is contributed by Asp-44. The active-site Nucleophile is Cys-135. Positions 139 and 165 each coordinate substrate. Glu-207 functions as the Proton donor in the catalytic mechanism.

This sequence belongs to the TenA family. As to quaternary structure, homotetramer.

The enzyme catalyses 4-amino-5-aminomethyl-2-methylpyrimidine + H2O = 4-amino-5-hydroxymethyl-2-methylpyrimidine + NH4(+). It carries out the reaction thiamine + H2O = 5-(2-hydroxyethyl)-4-methylthiazole + 4-amino-5-hydroxymethyl-2-methylpyrimidine + H(+). It participates in cofactor biosynthesis; thiamine diphosphate biosynthesis. Its function is as follows. Catalyzes an amino-pyrimidine hydrolysis reaction at the C5' of the pyrimidine moiety of thiamine compounds, a reaction that is part of a thiamine salvage pathway. Thus, catalyzes the conversion of 4-amino-5-aminomethyl-2-methylpyrimidine to 4-amino-5-hydroxymethyl-2-methylpyrimidine (HMP). To a lesser extent, is also able to catalyze the hydrolytic cleavage of thiamine; however, this thiaminase activity is unlikely to be physiologically relevant. Therefore, is involved in the regeneration of the thiamine pyrimidine from thiamine degraded products present in the environment, rather than in thiamine degradation. This Halalkalibacterium halodurans (strain ATCC BAA-125 / DSM 18197 / FERM 7344 / JCM 9153 / C-125) (Bacillus halodurans) protein is Aminopyrimidine aminohydrolase.